Here is a 166-residue protein sequence, read N- to C-terminus: ATP synthase subunit b (166 aa).

The helical transmembrane segment at 10–30 (LLFWMVIVFGIVFVILAKYGF) threads the bilayer.

The protein belongs to the ATPase B chain family. As to quaternary structure, F-type ATPases have 2 components, F(1) - the catalytic core - and F(0) - the membrane proton channel. F(1) has five subunits: alpha(3), beta(3), gamma(1), delta(1), epsilon(1). F(0) has three main subunits: a(1), b(2) and c(10-14). The alpha and beta chains form an alternating ring which encloses part of the gamma chain. F(1) is attached to F(0) by a central stalk formed by the gamma and epsilon chains, while a peripheral stalk is formed by the delta and b chains.

The protein resides in the cell inner membrane. F(1)F(0) ATP synthase produces ATP from ADP in the presence of a proton or sodium gradient. F-type ATPases consist of two structural domains, F(1) containing the extramembraneous catalytic core and F(0) containing the membrane proton channel, linked together by a central stalk and a peripheral stalk. During catalysis, ATP synthesis in the catalytic domain of F(1) is coupled via a rotary mechanism of the central stalk subunits to proton translocation. Its function is as follows. Component of the F(0) channel, it forms part of the peripheral stalk, linking F(1) to F(0). This Phocaeicola vulgatus (strain ATCC 8482 / DSM 1447 / JCM 5826 / CCUG 4940 / NBRC 14291 / NCTC 11154) (Bacteroides vulgatus) protein is ATP synthase subunit b.